The chain runs to 73 residues: Large ribosomal subunit protein bL31 (73 aa).

It belongs to the bacterial ribosomal protein bL31 family. Type A subfamily. In terms of assembly, part of the 50S ribosomal subunit.

Its function is as follows. Binds the 23S rRNA. In Cereibacter sphaeroides (strain ATCC 17025 / ATH 2.4.3) (Rhodobacter sphaeroides), this protein is Large ribosomal subunit protein bL31.